Reading from the N-terminus, the 560-residue chain is Phenol regulator MopR (560 aa).

Phenol is bound by residues histidine 106 and tryptophan 134. Cysteine 155, glutamate 178, cysteine 181, and cysteine 189 together coordinate Zn(2+). The 230-residue stretch at 245-474 folds into the Sigma-54 factor interaction domain; that stretch reads AVGESVAYRK…LENLLERATL (230 aa). ATP-binding positions include 273 to 280 and 336 to 345; these read GETGVGKE and AHGGTIFLDE.

In terms of assembly, homodimer.

With respect to regulation, activity is triggered by phenol binding. Involved in the regulation of the phenol degradation pathway. Activates phenol hydroxylase expression in the presence of phenol. The chain is Phenol regulator MopR from Acinetobacter guillouiae (Acinetobacter genomosp. 11).